The primary structure comprises 647 residues: Epithelial sodium channel subunit beta (647 aa).

The Cytoplasmic portion of the chain corresponds to 1-57 (MIHGKMKRLKRYFTRALHRIQKGPGYTYKELLVWFCDNTNTHGPKRIIKEGPKKRVM). Residues 58–78 (WFILTLVFAGLVFWQWGVLIL) form a helical membrane-spanning segment. Residues 79–552 (TYLSYGVSVS…GGQFGFWMGG (474 aa)) are Extracellular-facing. 8 disulfide bridges follow: Cys-104–Cys-291, Cys-215–Cys-222, Cys-268–Cys-275, Cys-381–Cys-468, Cys-406–Cys-464, Cys-410–Cys-460, Cys-419–Cys-446, and Cys-421–Cys-435. Residues 553-573 (SVLCIIEFGEIIIDCMWITIL) traverse the membrane as a helical segment. Over 574–647 (KFLAWSRNRR…AEPVSSDEEN (74 aa)) the chain is Cytoplasmic. The tract at residues 586–647 (RKRPQYSDPP…AEPVSSDEEN (62 aa)) is disordered.

It belongs to the amiloride-sensitive sodium channel (TC 1.A.6) family. SCNN1B subfamily. As to quaternary structure, component of the heterotrimeric epithelial sodium channel (ENaC) composed of an alpha/SCNN1A, a beta/SCNN1B and a gamma/SCNN1G subunit.

Its subcellular location is the apical cell membrane. The protein resides in the cytoplasmic vesicle membrane. It carries out the reaction Na(+)(in) = Na(+)(out). With respect to regulation, originally identified and characterized by its inhibition by the diuretic drug amiloride. Functionally, this is one of the three pore-forming subunits of the heterotrimeric epithelial sodium channel (ENaC), a critical regulator of sodium balance and fluid homeostasis. ENaC operates in epithelial tissues, where it mediates the electrodiffusion of sodium ions from extracellular fluid through the apical membrane of cells, with water following osmotically. This chain is Epithelial sodium channel subunit beta (scnn1b-a), found in Xenopus laevis (African clawed frog).